The primary structure comprises 294 residues: MTPFGISVPASSGNVGPGFDSTGLALGLYLHLNVEDANSIQFYSDGESTPTENHFIWNIAENIANKHGIRLPACKVQETNEIPLARGLGSSASAIVAGIELANQLGNLHLTPEQKLQYGTEIEGHPDNVAPSIYGGLVISTVLEKEIEHIQLRDIDVDIVAYIPNIELKTSVSRNCLPDSYNRDYAAKASAISNLTIAALYSKDYKLAGKLMEEDLFHEPFRSELIPNFAYIREEAKKYGAFGTILSGAGPTMLSITPKGNGPTLQNNMSKLSLLADYQVEYIPIDYQGISIQE.

Residue 83 to 93 (PLARGLGSSAS) participates in ATP binding.

This sequence belongs to the GHMP kinase family. Homoserine kinase subfamily.

The protein localises to the cytoplasm. The enzyme catalyses L-homoserine + ATP = O-phospho-L-homoserine + ADP + H(+). Its pathway is amino-acid biosynthesis; L-threonine biosynthesis; L-threonine from L-aspartate: step 4/5. Catalyzes the ATP-dependent phosphorylation of L-homoserine to L-homoserine phosphate. The protein is Homoserine kinase of Oceanobacillus iheyensis (strain DSM 14371 / CIP 107618 / JCM 11309 / KCTC 3954 / HTE831).